A 440-amino-acid chain; its full sequence is Ribosomal protein uS12 methylthiotransferase RimO (440 aa).

The region spanning 6–116 is the MTTase N-terminal domain; sequence PKVGFVSLGC…VVTAVHEVVP (111 aa). [4Fe-4S] cluster is bound by residues Cys-15, Cys-51, Cys-80, Cys-149, Cys-153, and Cys-156. Residues 135-373 form the Radical SAM core domain; it reads LTPRHYAYLK…MAHQQAISAA (239 aa). The region spanning 376–440 is the TRAM domain; the sequence is QLKVGKEIEV…DEYDLWAELV (65 aa).

The protein belongs to the methylthiotransferase family. RimO subfamily. The cofactor is [4Fe-4S] cluster.

It localises to the cytoplasm. The enzyme catalyses L-aspartate(89)-[ribosomal protein uS12]-hydrogen + (sulfur carrier)-SH + AH2 + 2 S-adenosyl-L-methionine = 3-methylsulfanyl-L-aspartate(89)-[ribosomal protein uS12]-hydrogen + (sulfur carrier)-H + 5'-deoxyadenosine + L-methionine + A + S-adenosyl-L-homocysteine + 2 H(+). Catalyzes the methylthiolation of an aspartic acid residue of ribosomal protein uS12. This Pseudomonas aeruginosa (strain ATCC 15692 / DSM 22644 / CIP 104116 / JCM 14847 / LMG 12228 / 1C / PRS 101 / PAO1) protein is Ribosomal protein uS12 methylthiotransferase RimO.